The primary structure comprises 304 residues: Non-specific ribonucleoside hydrolase RihC (304 aa).

Residue H233 is part of the active site.

Belongs to the IUNH family. RihC subfamily.

Hydrolyzes both purine and pyrimidine ribonucleosides with a broad-substrate specificity. This Escherichia coli O157:H7 protein is Non-specific ribonucleoside hydrolase RihC.